Consider the following 80-residue polypeptide: Large ribosomal subunit protein bL31B (80 aa).

The protein belongs to the bacterial ribosomal protein bL31 family. Type B subfamily. In terms of assembly, part of the 50S ribosomal subunit.

The protein is Large ribosomal subunit protein bL31B of Exiguobacterium sp. (strain ATCC BAA-1283 / AT1b).